Reading from the N-terminus, the 120-residue chain is Large ribosomal subunit protein eL34x (120 aa).

A disordered region spans residues 31 to 50 (TYQTTNKRASGPKCPVTGKR).

The protein belongs to the eukaryotic ribosomal protein eL34 family.

The polypeptide is Large ribosomal subunit protein eL34x (RPL34C) (Arabidopsis thaliana (Mouse-ear cress)).